A 141-amino-acid polypeptide reads, in one-letter code: Envelope protein A28 homolog (141 aa).

Residues 1 to 21 form a helical; Signal-anchor for type II membrane protein membrane-spanning segment; sequence MNPTSIVLIVIATVAVCLIIM. Topologically, residues 22 to 141 are virion surface; the sequence is QIYYIYENYD…QDCIFLKSVI (120 aa).

The protein belongs to the poxviridae A28 protein family. In terms of processing, contains two intramolecular disulfide bonds. They are created by the viral disulfide bond formation pathway, a poxvirus-specific pathway that operates on the cytoplasmic side of the MV membranes.

The protein localises to the virion membrane. Functionally, envelope protein required for virus entry into host cell and for cell-cell fusion (syncytium formation). This is Envelope protein A28 homolog from Erythrocebus patas (Red guenon).